The chain runs to 312 residues: Olfactory receptor 6C68 (312 aa).

The Extracellular portion of the chain corresponds to 1-23; that stretch reads MRKHTAITTFILLGLTEDPQLQV. A helical membrane pass occupies residues 24 to 44; the sequence is LLFMFLFITYMLSVTGKLTII. Residues 45–55 are Cytoplasmic-facing; sequence ALTMLDPHLKT. Residues 56–76 form a helical membrane-spanning segment; it reads PMYFFLQNLSFLEISFTATCV. The Extracellular portion of the chain corresponds to 77-95; it reads PRFLYSISTGNKIITYNAC. A disulfide bond links C95 and C177. Residues 96–116 form a helical membrane-spanning segment; it reads VIQLFFADLFGVTEFFLLATM. Over 117 to 143 the chain is Cytoplasmic; the sequence is SYDRYVAICKPLHYMAIMSNKVCKTMV. The chain crosses the membrane as a helical span at residues 144 to 164; that stretch reads ICCWMAALMIILPPLSLGFHL. Over 165–197 the chain is Extracellular; the sequence is EFCDSNVINHFGCDALPILKIPCSDTSLIEQMV. The helical transmembrane segment at 198-218 threads the bilayer; that stretch reads VASAVLTFIITLVCVVLSYTY. Residues 219-239 lie on the Cytoplasmic side of the membrane; sequence IIRTILKFPSVQQKKKAFSTC. A helical membrane pass occupies residues 240 to 260; sequence SSHITVVSITYGSCIFIYIKP. The Extracellular segment spans residues 261-271; the sequence is SAKEEVNINKG. Residues 272 to 292 form a helical membrane-spanning segment; that stretch reads VSVLISSISPMLNSFIYTLRN. Over 293 to 312 the chain is Cytoplasmic; sequence EQVKQAFHDSLKKIAFRLKK.

The protein belongs to the G-protein coupled receptor 1 family.

It is found in the cell membrane. Its function is as follows. Odorant receptor. The protein is Olfactory receptor 6C68 (OR6C68) of Homo sapiens (Human).